The sequence spans 508 residues: Photosystem II CP47 reaction center protein (508 aa).

6 consecutive transmembrane segments (helical) span residues 21–36 (SVHIMHTALVAGWAGS), 101–115 (IVFSGLCFLAAIWHW), 140–156 (GIHLFLSGLACFGFGAF), 203–218 (IAAGTLGILAGLFHLS), 237–252 (VLSSSIAAVFFAAFVV), and 457–472 (SFALLFFFGHIWHGAR).

This sequence belongs to the PsbB/PsbC family. PsbB subfamily. As to quaternary structure, PSII is composed of 1 copy each of membrane proteins PsbA, PsbB, PsbC, PsbD, PsbE, PsbF, PsbH, PsbI, PsbJ, PsbK, PsbL, PsbM, PsbT, PsbX, PsbY, PsbZ, Psb30/Ycf12, at least 3 peripheral proteins of the oxygen-evolving complex and a large number of cofactors. It forms dimeric complexes. It depends on Binds multiple chlorophylls. PSII binds additional chlorophylls, carotenoids and specific lipids. as a cofactor.

Its subcellular location is the plastid. The protein resides in the chloroplast thylakoid membrane. Functionally, one of the components of the core complex of photosystem II (PSII). It binds chlorophyll and helps catalyze the primary light-induced photochemical processes of PSII. PSII is a light-driven water:plastoquinone oxidoreductase, using light energy to abstract electrons from H(2)O, generating O(2) and a proton gradient subsequently used for ATP formation. The polypeptide is Photosystem II CP47 reaction center protein (Vitis vinifera (Grape)).